We begin with the raw amino-acid sequence, 185 residues long: Large ribosomal subunit protein uL5 (185 aa).

This sequence belongs to the universal ribosomal protein uL5 family. As to quaternary structure, part of the 50S ribosomal subunit; part of the 5S rRNA/L5/L18/L25 subcomplex. Contacts the 5S rRNA and the P site tRNA. Forms a bridge to the 30S subunit in the 70S ribosome.

Its function is as follows. This is one of the proteins that bind and probably mediate the attachment of the 5S RNA into the large ribosomal subunit, where it forms part of the central protuberance. In the 70S ribosome it contacts protein S13 of the 30S subunit (bridge B1b), connecting the 2 subunits; this bridge is implicated in subunit movement. Contacts the P site tRNA; the 5S rRNA and some of its associated proteins might help stabilize positioning of ribosome-bound tRNAs. In Sinorhizobium medicae (strain WSM419) (Ensifer medicae), this protein is Large ribosomal subunit protein uL5.